Reading from the N-terminus, the 669-residue chain is Thrombospondin-type laminin G domain and EAR repeat-containing protein (669 aa).

A signal peptide spans 1–19; that stretch reads MSALLSLCFVLPLAAPGHG. The 220-residue stretch at 58–277 folds into the Laminin G-like domain; that stretch reads GLQLSVAAPR…RVTLGPQPPC (220 aa). EAR repeat units follow at residues 313-358, 360-408, 412-460, 464-506, 514-570, 574-622, and 625-668; these read DYVE…KWTE, KFVS…KWSH, KFTP…KWNP, LFEA…VHSH, SFQL…ELNV, AFVK…RWQG, and GFVA…RLRT. N320 carries N-linked (GlcNAc...) asparagine glycosylation. Residues N468, N497, N556, and N569 are each glycosylated (N-linked (GlcNAc...) asparagine).

It localises to the secreted. Its subcellular location is the cell surface. The protein resides in the cell projection. The protein localises to the stereocilium. Plays a critical role in tooth and hair follicle morphogenesis through regulation of the Notch signaling pathway. May play a role in development or function of the auditory system. The protein is Thrombospondin-type laminin G domain and EAR repeat-containing protein (TSPEAR) of Homo sapiens (Human).